The primary structure comprises 510 residues: Sulfoquinovosyl transferase SQD2 (510 aa).

The N-terminal 83 residues, 1–83 (MTTLSSINLS…SNDMTITQVR (83 aa)), are a transit peptide targeting the chloroplast. Phosphoserine is present on Ser-88. A helical transmembrane segment spans residues 198–218 (PGVMVFGALAIAKMLSVPIVM).

This sequence belongs to the glycosyltransferase group 1 family. Glycosyltransferase 4 subfamily.

It is found in the plastid. The protein resides in the chloroplast membrane. It catalyses the reaction UDP-alpha-D-6-sulfoquinovose + a 1,2-diacyl-sn-glycerol = a 6-sulfo-alpha-D-quinovosyldiacylglycerol + UDP + H(+). It functions in the pathway glycolipid biosynthesis. Catalyzes the transfer of the sulfoquinovose moiety from UDP-sulfoquinovose to diacylglycerol during sulfolipid biosynthesis. Sulfolipid contributes to maintaining a negatively charged lipid-water interface, a requirement for proper function of photosynthetic membranes. Sulfolipid may also function as a substitute of anionic phospholipids under phosphate-limited growth conditions. The sequence is that of Sulfoquinovosyl transferase SQD2 from Arabidopsis thaliana (Mouse-ear cress).